A 1382-amino-acid polypeptide reads, in one-letter code: MRFRSDSRADHQHPKKQGSMDPDTIQALKYQDRSSSSSSNNKPKEKVGSASTSPSPTLFASNDSVKVEIGVGSSDKEKPDVKVSFFTIFRYASKRQLLINLFGTGMAIAAGAAQPLMNIFIGKIATVFLHFTSAIRSGDLDAIRAAHSDVYSTINSDALILLYLGIGMFFASMLYMAVFSYTSERIASNIKYAYLSSLFSKPIDFFEQCGQGTVAAKIGSDVHLIQIGIGEKLPMAIMYFSTFVTAAAVAFAFSWRLSLVLLPIAPLILLAGGVMGALTKGCKLVELDCIAKAASRAEEAFNAIKILKAFSKERTIGQEYDTLTTDTKAAGAKAGRIQGVGVGALLFIIYAGYALAFFYGAQLIARGELLPGRIVSVVFANFAGAFAIANLFSMIENFTMATAAASSVIGTIQQDLASSELSESRRNEEKSQTSRQLATGYNAELKLDHVHFAYPSKPERPVLKDLSLTIPSCVTTAIVGLSGSGKSTIFALLQRFYAPTRGSIRLDDVDISALDVDWLRGQIGVVEQQPTLFAMSIQANIELGLPNRHTRSAEELESLVVQAAKKANAHNFITALTHGYQTEVGSQGFLLSGGQKQRIAIARALIRDPKILLLDEATSALDSKSEAVVQAALDEAAKDRTTIIISHRLSTVRNADNIVVLGPDGIIEQGSHHELSIKPNGTFASMLRHQDDKTKPVMVTSEPEIVDSSHSLCLTEIPTMEIAHSLEVSRTISALADSVKPKDPSKNFEPPGESYASPAADGVKQDAPKTDSVGLRTLLHILIKDPETGRLAQLYMLGSLCAAIIGAVYPVYAILFGTAIEDYAPCNSSDGRPCPNPARGTMLHNNRISSGSFFIVAVGCAFISFYHVRSLYIAGSRVTHRLRVLVFQSLLCLDASFFDDPVNTSNDLASSLSVLSQGIYGGVGPTLGSIVQSLATVIVGYAVAIGYGWRLALVVIASTPLTITAGLLRLRVLARKESKTKQAHQHTTQQACESIGAIRTVSAFNLQPQTLQVYQKNLENASRSLRPTMCYSSVLFGLSQCVQLLVTALAFWYGGRELAQGHTSSKGFFTILISVVYGSVQAGNIFNYSADFSSAHSAACKSLSILKQAKEVVAEAQANDRDVQWNTEDSLPSGQIALKEVTFRYPQRPTCTVLDRLSLTIEPGTFCAIVGGSGSGKSTVLQLIERFYTPESGRVLLDGYSITEGDPARFRKYMSYVPQEPTLFQGTIGWNIALGATDENPEDVPLAKIQQAAELAQLGDLLASLPEGLNTQLSARGVQMSGGQKQRIAIARAMIRDPRVLLLDEATSALDPASERAVQGALDNVSQGRTTIAVAHRLSTIAKADKVIVMQAGKVVEEGSPRELFQRDGLFALMARLQGVSF.

A compositionally biased stretch (basic and acidic residues) spans 1 to 12; sequence MRFRSDSRADHQ. The interval 1–56 is disordered; it reads MRFRSDSRADHQHPKKQGSMDPDTIQALKYQDRSSSSSSNNKPKEKVGSASTSPSP. Asparagine 62 carries N-linked (GlcNAc...) asparagine glycosylation. Helical transmembrane passes span 101–121, 159–179, 233–253, 259–279, 339–359, and 374–394; these read LFGT…NIFI, LILL…MAVF, LPMA…AFAF, LVLL…GALT, GVGV…AFFY, and IVSV…LFSM. In terms of domain architecture, ABC transmembrane type-1 1 spans 101–400; it reads LFGTGMAIAA…LFSMIENFTM (300 aa). Asparagine 397 carries N-linked (GlcNAc...) asparagine glycosylation. The ABC transporter 1 domain maps to 445–688; the sequence is LKLDHVHFAY…PNGTFASMLR (244 aa). 480–487 serves as a coordination point for ATP; sequence GLSGSGKS. A glycan (N-linked (GlcNAc...) asparagine) is linked at asparagine 680. Residues 738–768 form a disordered region; that stretch reads SVKPKDPSKNFEPPGESYASPAADGVKQDAP. The region spanning 797-1094 is the ABC transmembrane type-1 2 domain; sequence LGSLCAAIIG…IFNYSADFSS (298 aa). The helical transmembrane segment at 800–820 threads the bilayer; that stretch reads LCAAIIGAVYPVYAILFGTAI. Asparagine 827 carries an N-linked (GlcNAc...) asparagine glycan. Residues 848 to 868 form a helical membrane-spanning segment; it reads ISSGSFFIVAVGCAFISFYHV. A glycan (N-linked (GlcNAc...) asparagine) is linked at asparagine 903. The next 2 helical transmembrane spans lie at 911–931 and 951–973; these read SLSV…GSIV and LALV…LRVL. Asparagine 1020 carries an N-linked (GlcNAc...) asparagine glycan. 2 consecutive transmembrane segments (helical) span residues 1034–1054 and 1067–1087; these read VLFG…FWYG and GFFT…NIFN. The ABC transporter 2 domain occupies 1136-1377; the sequence is IALKEVTFRY…DGLFALMARL (242 aa). 1171–1178 lines the ATP pocket; the sequence is GGSGSGKS. Asparagine 1324 carries an N-linked (GlcNAc...) asparagine glycan.

The protein belongs to the ABC transporter superfamily. ABCB family. Multidrug resistance exporter (TC 3.A.1.201) subfamily.

It is found in the cell membrane. ABC-type transporter; part of the gene cluster that mediates the biosynthesis of the glycolipid biosurfactant ustilagic acid (UA). UA is a secreted cellobiose glycolipid that is toxic for many microorganisms and confers biocontrol activity to U.maydis. Export of UA is presumably catalyzed by the ABC transporter atr1. Atr1 appears to be quite unspecific, as many of the UA derivatives produced by cluster mutant strains are readily exported. This chain is ABC-type transporter atr1, found in Mycosarcoma maydis (Corn smut fungus).